A 339-amino-acid polypeptide reads, in one-letter code: Phosphoribosylformylglycinamidine cyclo-ligase (339 aa).

This sequence belongs to the AIR synthase family.

It is found in the cytoplasm. The catalysed reaction is 2-formamido-N(1)-(5-O-phospho-beta-D-ribosyl)acetamidine + ATP = 5-amino-1-(5-phospho-beta-D-ribosyl)imidazole + ADP + phosphate + H(+). Its pathway is purine metabolism; IMP biosynthesis via de novo pathway; 5-amino-1-(5-phospho-D-ribosyl)imidazole from N(2)-formyl-N(1)-(5-phospho-D-ribosyl)glycinamide: step 2/2. This Oceanobacillus iheyensis (strain DSM 14371 / CIP 107618 / JCM 11309 / KCTC 3954 / HTE831) protein is Phosphoribosylformylglycinamidine cyclo-ligase.